Reading from the N-terminus, the 284-residue chain is Bifunctional protein FolD (284 aa).

Residues 165–167 (GRS), S190, and V231 each bind NADP(+).

The protein belongs to the tetrahydrofolate dehydrogenase/cyclohydrolase family. Homodimer.

The catalysed reaction is (6R)-5,10-methylene-5,6,7,8-tetrahydrofolate + NADP(+) = (6R)-5,10-methenyltetrahydrofolate + NADPH. It carries out the reaction (6R)-5,10-methenyltetrahydrofolate + H2O = (6R)-10-formyltetrahydrofolate + H(+). The protein operates within one-carbon metabolism; tetrahydrofolate interconversion. Functionally, catalyzes the oxidation of 5,10-methylenetetrahydrofolate to 5,10-methenyltetrahydrofolate and then the hydrolysis of 5,10-methenyltetrahydrofolate to 10-formyltetrahydrofolate. The chain is Bifunctional protein FolD from Ruminiclostridium cellulolyticum (strain ATCC 35319 / DSM 5812 / JCM 6584 / H10) (Clostridium cellulolyticum).